The primary structure comprises 289 residues: Bifunctional protein FolD (289 aa).

NADP(+) is bound by residues 166–168 (GVS) and Ile-232.

Belongs to the tetrahydrofolate dehydrogenase/cyclohydrolase family. Homodimer.

The catalysed reaction is (6R)-5,10-methylene-5,6,7,8-tetrahydrofolate + NADP(+) = (6R)-5,10-methenyltetrahydrofolate + NADPH. It carries out the reaction (6R)-5,10-methenyltetrahydrofolate + H2O = (6R)-10-formyltetrahydrofolate + H(+). The protein operates within one-carbon metabolism; tetrahydrofolate interconversion. In terms of biological role, catalyzes the oxidation of 5,10-methylenetetrahydrofolate to 5,10-methenyltetrahydrofolate and then the hydrolysis of 5,10-methenyltetrahydrofolate to 10-formyltetrahydrofolate. This chain is Bifunctional protein FolD, found in Methylobacillus flagellatus (strain ATCC 51484 / DSM 6875 / VKM B-1610 / KT).